The primary structure comprises 205 residues: Glycerol-3-phosphate acyltransferase (205 aa).

A run of 6 helical transmembrane segments spans residues 8–28 (IALF…GYLA), 57–77 (TPAL…ILIA), 84–104 (ESLQ…PVWL), 118–138 (VFLG…LLIL), 143–163 (IVSL…LINS), and 164–184 (KETF…LVLW).

The protein belongs to the PlsY family. As to quaternary structure, probably interacts with PlsX.

Its subcellular location is the cell inner membrane. The catalysed reaction is an acyl phosphate + sn-glycerol 3-phosphate = a 1-acyl-sn-glycero-3-phosphate + phosphate. It participates in lipid metabolism; phospholipid metabolism. In terms of biological role, catalyzes the transfer of an acyl group from acyl-phosphate (acyl-PO(4)) to glycerol-3-phosphate (G3P) to form lysophosphatidic acid (LPA). This enzyme utilizes acyl-phosphate as fatty acyl donor, but not acyl-CoA or acyl-ACP. This is Glycerol-3-phosphate acyltransferase from Prochlorococcus marinus (strain SARG / CCMP1375 / SS120).